Here is a 459-residue protein sequence, read N- to C-terminus: ATP-dependent protease ATPase subunit HslU (459 aa).

ATP is bound by residues Val21, 63–68 (GVGKTE), Asp273, Glu338, and Arg410.

This sequence belongs to the ClpX chaperone family. HslU subfamily. A double ring-shaped homohexamer of HslV is capped on each side by a ring-shaped HslU homohexamer. The assembly of the HslU/HslV complex is dependent on binding of ATP.

It localises to the cytoplasm. Functionally, ATPase subunit of a proteasome-like degradation complex; this subunit has chaperone activity. The binding of ATP and its subsequent hydrolysis by HslU are essential for unfolding of protein substrates subsequently hydrolyzed by HslV. HslU recognizes the N-terminal part of its protein substrates and unfolds these before they are guided to HslV for hydrolysis. This chain is ATP-dependent protease ATPase subunit HslU, found in Thermosipho africanus (strain TCF52B).